A 130-amino-acid polypeptide reads, in one-letter code: Small ribosomal subunit protein uS9 (130 aa).

This sequence belongs to the universal ribosomal protein uS9 family.

In Bacillus licheniformis (strain ATCC 14580 / DSM 13 / JCM 2505 / CCUG 7422 / NBRC 12200 / NCIMB 9375 / NCTC 10341 / NRRL NRS-1264 / Gibson 46), this protein is Small ribosomal subunit protein uS9.